The sequence spans 476 residues: Adenosylhomocysteinase (476 aa).

3 residues coordinate substrate: Thr-61, Asp-140, and Glu-200. Thr-201–Thr-203 contributes to the NAD(+) binding site. Residues Lys-230 and Asp-234 each contribute to the substrate site. Residues Asn-235, Gly-264–Gly-269, Glu-287, Asn-322, Ile-343–His-345, and Asn-389 contribute to the NAD(+) site.

The protein belongs to the adenosylhomocysteinase family. The cofactor is NAD(+).

The protein localises to the cytoplasm. It carries out the reaction S-adenosyl-L-homocysteine + H2O = L-homocysteine + adenosine. It participates in amino-acid biosynthesis; L-homocysteine biosynthesis; L-homocysteine from S-adenosyl-L-homocysteine: step 1/1. Its function is as follows. May play a key role in the regulation of the intracellular concentration of adenosylhomocysteine. The protein is Adenosylhomocysteinase of Acidovorax ebreus (strain TPSY) (Diaphorobacter sp. (strain TPSY)).